A 480-amino-acid chain; its full sequence is MKVLHACSELYPLLKTGGLADVMGALPFAQKEIGIDARIVLPAYPAIKAGIPETTVVSEFDNFAGHIVLRYGEYKGLGVYLIDAPHLYQREGNPYHDQWYNDYADNYKRFALLGWVAAELATGLDSWWHADVVHAHDWHAGLASAYLFNKGRPAKSVFTIHNLAYQGQFAYHHLVEIGLPAGMFHVDGLELHGQISYLKAGLYYSDAVTAVSPTYAKEITTPEFGYGLQGLLTTLNSQGKLVGILNGVDDQIWHPNHDAYIEHHYKLKAMTGKRKNKEALQAYFNLPQDPDALLFVMVTRLTEQKGVDLLIDSAEEIVKQGGQLTILGSGSPHLEAGILHLAQQYPHQIAVKIGYDEALSHLMIAGGDVILVPSRFEPCGLTQLYGLKYGTLPLVRATGGLADTVVNATVENIKSRLATGFVFEQANREALRQALVNAFALWQKQRLWFTVRSVAMEQDFSWQISATGYHALYQRLLSFN.

An ADP-alpha-D-glucose-binding site is contributed by Lys-15.

It belongs to the glycosyltransferase 1 family. Bacterial/plant glycogen synthase subfamily.

The enzyme catalyses [(1-&gt;4)-alpha-D-glucosyl](n) + ADP-alpha-D-glucose = [(1-&gt;4)-alpha-D-glucosyl](n+1) + ADP + H(+). Its pathway is glycan biosynthesis; glycogen biosynthesis. Its function is as follows. Synthesizes alpha-1,4-glucan chains using ADP-glucose. This chain is Glycogen synthase, found in Pasteurella multocida (strain Pm70).